The primary structure comprises 104 residues: Pyrimidine/purine nucleoside phosphorylase (104 aa).

This sequence belongs to the nucleoside phosphorylase PpnP family.

The catalysed reaction is a purine D-ribonucleoside + phosphate = a purine nucleobase + alpha-D-ribose 1-phosphate. The enzyme catalyses adenosine + phosphate = alpha-D-ribose 1-phosphate + adenine. It carries out the reaction cytidine + phosphate = cytosine + alpha-D-ribose 1-phosphate. It catalyses the reaction guanosine + phosphate = alpha-D-ribose 1-phosphate + guanine. The catalysed reaction is inosine + phosphate = alpha-D-ribose 1-phosphate + hypoxanthine. The enzyme catalyses thymidine + phosphate = 2-deoxy-alpha-D-ribose 1-phosphate + thymine. It carries out the reaction uridine + phosphate = alpha-D-ribose 1-phosphate + uracil. It catalyses the reaction xanthosine + phosphate = alpha-D-ribose 1-phosphate + xanthine. Catalyzes the phosphorolysis of diverse nucleosides, yielding D-ribose 1-phosphate and the respective free bases. Can use uridine, adenosine, guanosine, cytidine, thymidine, inosine and xanthosine as substrates. Also catalyzes the reverse reactions. The polypeptide is Pyrimidine/purine nucleoside phosphorylase (Thiobacillus denitrificans (strain ATCC 25259 / T1)).